Consider the following 68-residue polypeptide: Serine palmitoyltransferase small subunit A (68 aa).

The Cytoplasmic portion of the chain corresponds to 1–9 (MAFEDVWKK). Residues 10-26 (ISWLYYQYILVTALYML) form a helical membrane-spanning segment. Topologically, residues 27 to 31 (EPWER) are lumenal. A helical membrane pass occupies residues 32 to 54 (AIFNSILISVAGMAVYTGYVFMP). Residues 55–68 (QHIMAILQYFEMVQ) are Cytoplasmic-facing.

It belongs to the SPTSS family. SPTSSA subfamily. Component of the serine palmitoyltransferase (SPT) complex, which is composed of SPTLC1, SPTLC2 or SPTLC3 and SPTSSA or SPTSSB. The heterodimer consisting of SPTLC1 and SPTLC2/SPTLC3 forms the catalytic core of the enzyme, while SPTSSA or SPTSSB subunits determine substrate specificity. SPT also interacts with ORMDL proteins, especially ORMDL3, which negatively regulate SPT activity in the presence of ceramides.

Its subcellular location is the endoplasmic reticulum membrane. The protein operates within lipid metabolism; sphingolipid metabolism. Functionally, component of the serine palmitoyltransferase multisubunit enzyme (SPT) that catalyzes the initial and rate-limiting step in sphingolipid biosynthesis by condensing L-serine and activated acyl-CoA (most commonly palmitoyl-CoA) to form long-chain bases. The SPT complex is composed of SPTLC1, SPTLC2 or SPTLC3 and SPTSSA or SPTSSB. Within this complex, the heterodimer consisting of SPTLC1 and SPTLC2/SPTLC3 forms the catalytic core. Within the SPT complex, SPTSSA stimulates the catalytic activity and plays a role in substrate specificity, which depends upon the overall complex composition. The SPTLC1-SPTLC2-SPTSSA complex shows a strong preference for C16-CoA substrate, while the SPTLC1-SPTLC3-SPTSSA isozyme uses both C14-CoA and C16-CoA as substrates, with a slight preference for C14-CoA. Independently of its action as a SPT component, may be involved in MBOAT7 localization to mitochondria-associated membranes, a membrane bridge between the endoplasmic reticulum and mitochondria, may hence affect MBOAT7-catalyzed incorporation of arachidonic acid into phosphatidylinositol. The chain is Serine palmitoyltransferase small subunit A (sptssa) from Salmo salar (Atlantic salmon).